The sequence spans 290 residues: Probable adenylate kinase 2, chloroplastic (290 aa).

Residues 1–10 are compositionally biased toward low complexity; that stretch reads MASSMAATAT. The segment at 1–37 is disordered; it reads MASSMAATATLSPPVLSAERPTVRGGLFLPPSPATSR. The N-terminal 61 residues, 1-61, are a transit peptide targeting the chloroplast; the sequence is MASSMAATAT…ATRKPRSLPR (61 aa). ATP is bound at residue 83 to 88; it reads ASGKGT. An NMP region spans residues 103–132; sequence SAGDLLRAEIAAGSENGKRAKEFMEKGQLV. Residues R109, 130–132, 159–162, and Q166 contribute to the AMP site; these read QLV and GYPR. Residues R193, R197, and 206–207 each bind ATP; that span reads IY. The LID stretch occupies residues 196–229; it reads GRRLDPVTGKIYHLKYSPPENEEIASRLTQRFDD. AMP contacts are provided by R226 and R237.

It belongs to the adenylate kinase family.

It is found in the plastid. The protein localises to the chloroplast. It catalyses the reaction AMP + ATP = 2 ADP. Functionally, catalyzes the reversible transfer of the terminal phosphate group between ATP and AMP. Plays an important role in cellular energy homeostasis and in adenine nucleotide metabolism. The protein is Probable adenylate kinase 2, chloroplastic of Oryza sativa subsp. japonica (Rice).